We begin with the raw amino-acid sequence, 418 residues long: Glutamate dehydrogenase (418 aa).

Residue lysine 105 is part of the active site. Residue 217–223 (GYGNVGY) coordinates NAD(+).

This sequence belongs to the Glu/Leu/Phe/Val dehydrogenases family. In terms of assembly, homohexamer.

Its subcellular location is the cytoplasm. The catalysed reaction is L-glutamate + NAD(+) + H2O = 2-oxoglutarate + NH4(+) + NADH + H(+). It carries out the reaction L-glutamate + NADP(+) + H2O = 2-oxoglutarate + NH4(+) + NADPH + H(+). The chain is Glutamate dehydrogenase (gdhA) from Aeropyrum pernix (strain ATCC 700893 / DSM 11879 / JCM 9820 / NBRC 100138 / K1).